The chain runs to 172 residues: Adenine phosphoribosyltransferase (172 aa).

The protein belongs to the purine/pyrimidine phosphoribosyltransferase family. As to quaternary structure, homodimer.

It is found in the cytoplasm. The catalysed reaction is AMP + diphosphate = 5-phospho-alpha-D-ribose 1-diphosphate + adenine. It functions in the pathway purine metabolism; AMP biosynthesis via salvage pathway; AMP from adenine: step 1/1. In terms of biological role, catalyzes a salvage reaction resulting in the formation of AMP, that is energically less costly than de novo synthesis. This is Adenine phosphoribosyltransferase from Microcystis aeruginosa (strain NIES-843 / IAM M-2473).